The following is a 470-amino-acid chain: Serine carboxypeptidase ctsa-4.1 (470 aa).

A signal peptide spans 1 to 19 (MKLLSILFIFVSSYSFCLA). Asn132 carries N-linked (GlcNAc...) asparagine glycosylation. Residue Ser169 is part of the active site. The N-linked (GlcNAc...) asparagine glycan is linked to Asn316. Asp380 is an active-site residue. An N-linked (GlcNAc...) asparagine glycan is attached at Asn396. Residue His441 is part of the active site.

It belongs to the peptidase S10 family.

The enzyme catalyses Release of a C-terminal amino acid with broad specificity.. This chain is Serine carboxypeptidase ctsa-4.1, found in Caenorhabditis elegans.